A 190-amino-acid chain; its full sequence is Large ribosomal subunit protein bL9 (190 aa).

The protein belongs to the bacterial ribosomal protein bL9 family.

Its function is as follows. Binds to the 23S rRNA. The chain is Large ribosomal subunit protein bL9 from Methylorubrum extorquens (strain CM4 / NCIMB 13688) (Methylobacterium extorquens).